Here is a 197-residue protein sequence, read N- to C-terminus: dTTP/UTP pyrophosphatase (197 aa).

The Proton acceptor role is filled by D70.

This sequence belongs to the Maf family. YhdE subfamily. A divalent metal cation is required as a cofactor.

The protein resides in the cytoplasm. The catalysed reaction is dTTP + H2O = dTMP + diphosphate + H(+). The enzyme catalyses UTP + H2O = UMP + diphosphate + H(+). Functionally, nucleoside triphosphate pyrophosphatase that hydrolyzes dTTP and UTP. May have a dual role in cell division arrest and in preventing the incorporation of modified nucleotides into cellular nucleic acids. This chain is dTTP/UTP pyrophosphatase (yceF2), found in Shigella boydii serotype 4 (strain Sb227).